We begin with the raw amino-acid sequence, 520 residues long: Probable methylmalonate-semialdehyde/malonate-semialdehyde dehydrogenase [acylating], mitochondrial (520 aa).

Ala169, Phe171, Lys195, Glu198, Arg199, and Ser248 together coordinate NAD(+). Cys303 (nucleophile) is an active-site residue. NAD(+) is bound at residue Glu403.

The protein belongs to the aldehyde dehydrogenase family. In terms of assembly, homotetramer.

The protein resides in the mitochondrion. It carries out the reaction 2-methyl-3-oxopropanoate + NAD(+) + CoA + H2O = propanoyl-CoA + hydrogencarbonate + NADH + H(+). The catalysed reaction is 3-oxopropanoate + NAD(+) + CoA + H2O = hydrogencarbonate + acetyl-CoA + NADH + H(+). In terms of biological role, probable malonate and methylmalonate semialdehyde dehydrogenase involved in the catabolism of valine, thymine, and compounds catabolized by way of beta-alanine, including uracil and cytidine. The chain is Probable methylmalonate-semialdehyde/malonate-semialdehyde dehydrogenase [acylating], mitochondrial from Drosophila pseudoobscura pseudoobscura (Fruit fly).